Here is a 375-residue protein sequence, read N- to C-terminus: Probable 1-acyl-sn-glycerol-3-phosphate acyltransferase 5 (375 aa).

Helical transmembrane passes span 21 to 41 (IICLMVLVSTAFMMLIFWGFL) and 57 to 77 (CVSFFFGSWLALWPFLFEKIN). Residues 100-105 (HRTEVD) carry the HXXXXD motif motif. Helical transmembrane passes span 312-332 (YLINCLAVIAFTTICTHLTFF) and 337-357 (WFRIYVSLACVYLTSATHFNL).

It belongs to the 1-acyl-sn-glycerol-3-phosphate acyltransferase family. Widely expressed at low level.

It is found in the membrane. It catalyses the reaction a 1-acyl-sn-glycero-3-phosphate + an acyl-CoA = a 1,2-diacyl-sn-glycero-3-phosphate + CoA. The protein operates within phospholipid metabolism; CDP-diacylglycerol biosynthesis; CDP-diacylglycerol from sn-glycerol 3-phosphate: step 2/3. May convert lysophosphatidic acid (LPA) into phosphatidic acid by incorporating acyl moiety at the 2 position. Has no activity when expressed in bacteria or yeast. The protein is Probable 1-acyl-sn-glycerol-3-phosphate acyltransferase 5 (LPAT5) of Arabidopsis thaliana (Mouse-ear cress).